Reading from the N-terminus, the 138-residue chain is Probable histone H2AXb (138 aa).

Residues 1–10 show a composition bias toward gly residues; that stretch reads MSSAGGGGGR. Positions 1 to 24 are disordered; sequence MSSAGGGGGRGKSKGSKSVSRSSK. The residue at position 135 (Ser135) is a Phosphoserine; by ATM and ATR. The [ST]-Q motif signature appears at 135–136; the sequence is SQ.

It belongs to the histone H2A family. In terms of assembly, the nucleosome is a histone octamer containing two molecules each of H2A, H2B, H3 and H4 assembled in one H3-H4 heterotetramer and two H2A-H2B heterodimers. The octamer wraps approximately 147 bp of DNA. Interacts with numerous proteins required for DNA damage signaling and repair when phosphorylated on Ser-135. In terms of processing, phosphorylated to form H2AXS139ph (gamma-H2AX) in response to DNA double strand breaks (DSBs) generated by exogenous genotoxic agents and by stalled replication forks, and may also occur during meiotic recombination events. Phosphorylation can extend up to several thousand nucleosomes from the actual site of the DSB and may mark the surrounding chromatin for recruitment of proteins required for DNA damage signaling and repair. Widespread phosphorylation may also serve to amplify the damage signal or aid repair of persistent lesions. H2AXS139ph in response to ionizing radiation is mediated by ATM while defects in DNA replication induce H2AXS139ph subsequent to activation of ATR. Dephosphorylation of H2AXS139ph by PP2A is required for DNA DSB repair.

The protein resides in the nucleus. Its subcellular location is the chromosome. Functionally, variant histone H2A which replaces conventional H2A in a subset of nucleosomes. Nucleosomes wrap and compact DNA into chromatin, limiting DNA accessibility to the cellular machineries which require DNA as a template. Histones thereby play a central role in transcription regulation, DNA repair, DNA replication and chromosomal stability. DNA accessibility is regulated via a complex set of post-translational modifications of histones, also called histone code, and nucleosome remodeling. Required for checkpoint-mediated arrest of cell cycle progression in response to low doses of ionizing radiation and for efficient repair of DNA double strand breaks (DSBs) specifically when modified by C-terminal phosphorylation. The protein is Probable histone H2AXb of Oryza sativa subsp. indica (Rice).